Reading from the N-terminus, the 93-residue chain is UPF0358 protein RBAM_014700 (93 aa).

It belongs to the UPF0358 family.

This Bacillus velezensis (strain DSM 23117 / BGSC 10A6 / LMG 26770 / FZB42) (Bacillus amyloliquefaciens subsp. plantarum) protein is UPF0358 protein RBAM_014700.